The following is a 1972-amino-acid chain: Myosin-11 (1972 aa).

3 positions are modified to phosphoserine: serine 8, serine 23, and serine 40. The Myosin N-terminal SH3-like domain occupies 31-81; that stretch reads VAKKLVWVPSEKQGFEAASIKEEKGDEVVVELVENGKKVTVGKDDIQKMNP. In terms of domain architecture, Myosin motor spans 85 to 783; the sequence is SKVEDMAELT…VLAHLEEERD (699 aa). Lysine 129 bears the N6,N6,N6-trimethyllysine mark. 178 to 185 provides a ligand contact to ATP; that stretch reads GESGAGKT. Actin-binding stretches follow at residues 661 to 683 and 762 to 776; these read LGKL…IPNH and RIGQ…GVLA. One can recognise an IQ domain in the interval 786 to 815; that stretch reads ITDVIMAFQAMCRGYLARKAFTKRQQQLTA. Positions 844–1934 form a coiled coil; the sequence is LLQVTRQEEE…KSKLRRGNEA (1091 aa). Phosphothreonine is present on threonine 1177. A phosphoserine mark is found at serine 1684 and serine 1722. Positions 1771–1788 are enriched in polar residues; the sequence is NELATERSTAQKNESARQ. 2 disordered regions span residues 1771 to 1797 and 1867 to 1972; these read NELA…NKEL and QYKE…KASE. Positions 1867-1876 are enriched in basic and acidic residues; sequence QYKEQAEKGN. Residues 1935–1972 are C-terminal; it reads SFVPSRRAGGRRVIENTDGSEEEMDARDSDFNGTKASE. Position 1951 is a phosphothreonine (threonine 1951). Residues serine 1954 and serine 1971 each carry the phosphoserine modification.

Belongs to the TRAFAC class myosin-kinesin ATPase superfamily. Myosin family. Muscle myosin is a hexameric protein that consists of 2 heavy chain subunits (MHC), 2 alkali light chain subunits (MLC) and 2 regulatory light chain subunits (MLC-2).

It localises to the melanosome. Its subcellular location is the cytoplasm. The protein resides in the myofibril. Its function is as follows. Muscle contraction. In Mus musculus (Mouse), this protein is Myosin-11 (Myh11).